The following is a 415-amino-acid chain: Beta-2 adrenergic receptor (415 aa).

The Extracellular segment spans residues 1-34; it reads MGQPANRSVFLLAPNGSHAPDQGDSQERSEAWVV. N-linked (GlcNAc...) asparagine glycans are attached at residues Asn6 and Asn15. A helical membrane pass occupies residues 35 to 58; the sequence is GMGIVMSLIVLAIVFGNVLVITAI. Residues 59-71 lie on the Cytoplasmic side of the membrane; the sequence is ARFERLQTVTNYF. A helical transmembrane segment spans residues 72–95; it reads ITSLACADLVMGLAVVPFGASHIL. Residues 96–106 are Extracellular-facing; that stretch reads MKMWTFGNFWC. Disulfide bonds link Cys106–Cys191 and Cys184–Cys190. A helical membrane pass occupies residues 107–129; the sequence is EFWTSIDVLCVTASIETLCVIAV. Over 130–150 the chain is Cytoplasmic; that stretch reads DRYFAITSPFKYQSLLTKNKA. Tyr141 bears the Phosphotyrosine mark. The helical transmembrane segment at 151 to 174 threads the bilayer; that stretch reads RVVILMVWIVSGLTSFLPIQMHWY. The Extracellular segment spans residues 175-196; sequence RATHQEAINCYAKETCCDFFTN. The chain crosses the membrane as a helical span at residues 197 to 220; the sequence is QAYAIASSIVSFYLPLVVMVFVYS. Residues 221–274 are Cytoplasmic-facing; it reads RVFQVAQRQLQKIDRSEGRFHAQNLSQVEQDGRSGHGHRRSSKFCLKEHKALKT. Residue Ser246 is modified to Phosphoserine. Phosphoserine; by PKA occurs at positions 261 and 262. Cys265 carries S-palmitoyl cysteine lipidation. The helical transmembrane segment at 275 to 298 threads the bilayer; sequence LGIIMGTFTLCWLPFFIVNIVHVI. Residues 299–305 are Extracellular-facing; sequence QDNLIPK. The helical transmembrane segment at 306 to 329 threads the bilayer; sequence EVYILLNWVGYVNSAFNPLIYCRS. Topologically, residues 330–415 are cytoplasmic; that stretch reads PDFRIAFQEL…RNCSTNDSLL (86 aa). The S-palmitoyl cysteine moiety is linked to residue Cys341. Phosphoserine; by PKA is present on residues Ser345 and Ser346. Ser355 carries the post-translational modification Phosphoserine; by BARK. Residues 379–415 are disordered; the sequence is SELLCEDPPGTEDRQGTVPSDSVDSQGRNCSTNDSLL. 4-hydroxyproline occurs at positions 387 and 397. Polar residues predominate over residues 395–415; the sequence is TVPSDSVDSQGRNCSTNDSLL. The PDZ-binding motif lies at 412-415; it reads DSLL.

This sequence belongs to the G-protein coupled receptor 1 family. Adrenergic receptor subfamily. ADRB2 sub-subfamily. As to quaternary structure, binds NHERF1 and GPRASP1. Interacts with ARRB1 and ARRB2. Interacts with SRC. Interacts with USP20 and USP33. Interacts with VHL; the interaction, which is increased on hydroxylation of ADRB2, ubiquitinates ADRB2 leading to its degradation. Interacts with EGLN3; the interaction hydroxylates ADRB2 facilitating VHL-E3 ligase-mediated ubiquitination. Interacts (via PDZ-binding motif) with SNX27 (via PDZ domain); the interaction is required when endocytosed to prevent degradation in lysosomes and promote recycling to the plasma membrane. Interacts with CNIH4. Interacts with ARRDC3. Interacts with NEDD4. Interacts with MARCHF2. Palmitoylated; may reduce accessibility of Ser-345 and Ser-346 by anchoring Cys-341 to the plasma membrane. Agonist stimulation promotes depalmitoylation and further allows Ser-345 and Ser-346 phosphorylation. In terms of processing, phosphorylated by PKA and BARK upon agonist stimulation, which mediates homologous desensitization of the receptor. PKA-mediated phosphorylation seems to facilitate phosphorylation by BARK. Post-translationally, phosphorylation of Tyr-141 is induced by insulin and leads to supersensitization of the receptor. Polyubiquitinated. Agonist-induced ubiquitination leads to sort internalized receptors to the lysosomes for degradation. Deubiquitination by USP20 and USP33, leads to ADRB2 recycling and resensitization after prolonged agonist stimulation. USP20 and USP33 are constitutively associated and are dissociated immediately after agonist stimulation. Ubiquitination by the VHL-E3 ligase complex is oxygen-dependent. In terms of processing, hydroxylation by EGLN3 occurs only under normoxia and increases the interaction with VHL and the subsequent ubiquitination and degradation of ADRB2. Post-translationally, palmitoylated. Mainly palmitoylated at Cys-341. Palmitoylation may reduce accessibility of phosphorylation sites by anchoring the receptor to the plasma membrane. Agonist stimulation promotes depalmitoylation and further allows Ser-345 and Ser-346 phosphorylation. Also undergoes transient, ligand-induced palmitoylation at Cys-265 probably by ZDHHC9, ZDHHC14 and ZDHHC18 within the Golgi. Palmitoylation at Cys-265 requires phosphorylation by PKA and receptor internalization and stabilizes the receptor. Could be depalmitoylated by LYPLA1 at the plasma membrane.

The protein resides in the cell membrane. It localises to the early endosome. Its subcellular location is the golgi apparatus. Its function is as follows. Beta-adrenergic receptors mediate the catecholamine-induced activation of adenylate cyclase through the action of G proteins. The beta-2-adrenergic receptor binds epinephrine with an approximately 30-fold greater affinity than it does norepinephrine. The chain is Beta-2 adrenergic receptor (ADRB2) from Canis lupus familiaris (Dog).